The primary structure comprises 290 residues: Cbb3-type cytochrome c oxidase subunit FixP (290 aa).

The chain crosses the membrane as a helical span at residues 33–53 (WWVITFYITIVWAIGYWIVYP). 2 Cytochrome c domains span residues 109-198 (LARA…RSLS) and 206-287 (YDAA…HSLG). Positions 122, 125, 126, 173, 219, 222, 223, and 264 each coordinate heme c.

Belongs to the CcoP / FixP family. As to quaternary structure, component of the cbb3-type cytochrome c oxidase at least composed of FixN, FixO, FixQ and FixP. It depends on heme c as a cofactor.

It localises to the cell inner membrane. The protein operates within energy metabolism; oxidative phosphorylation. Functionally, C-type cytochrome. Part of the cbb3-type cytochrome c oxidase complex. FixP subunit is required for transferring electrons from donor cytochrome c via its heme groups to FixO subunit. From there, electrons are shuttled to the catalytic binuclear center of FixN subunit where oxygen reduction takes place. The complex also functions as a proton pump. This Bradyrhizobium sp. (strain ORS 278) protein is Cbb3-type cytochrome c oxidase subunit FixP.